The chain runs to 505 residues: Deoxyguanosinetriphosphate triphosphohydrolase (505 aa).

The region spanning 66 to 273 (RLTHSMEVQQ…MEAADDISYC (208 aa)) is the HD domain.

This sequence belongs to the dGTPase family. Type 1 subfamily. In terms of assembly, homotetramer. Mg(2+) serves as cofactor.

The enzyme catalyses dGTP + H2O = 2'-deoxyguanosine + triphosphate + H(+). Its function is as follows. dGTPase preferentially hydrolyzes dGTP over the other canonical NTPs. This Escherichia coli O81 (strain ED1a) protein is Deoxyguanosinetriphosphate triphosphohydrolase.